Consider the following 71-residue polypeptide: Exodeoxyribonuclease 7 small subunit (71 aa).

The protein belongs to the XseB family. As to quaternary structure, heterooligomer composed of large and small subunits.

The protein resides in the cytoplasm. The catalysed reaction is Exonucleolytic cleavage in either 5'- to 3'- or 3'- to 5'-direction to yield nucleoside 5'-phosphates.. In terms of biological role, bidirectionally degrades single-stranded DNA into large acid-insoluble oligonucleotides, which are then degraded further into small acid-soluble oligonucleotides. The sequence is that of Exodeoxyribonuclease 7 small subunit from Clostridium botulinum (strain Loch Maree / Type A3).